Reading from the N-terminus, the 88-residue chain is DNA-directed RNA polymerase subunit omega (88 aa).

It belongs to the RNA polymerase subunit omega family. In terms of assembly, the RNAP catalytic core consists of 2 alpha, 1 beta, 1 beta' and 1 omega subunit. When a sigma factor is associated with the core the holoenzyme is formed, which can initiate transcription.

It carries out the reaction RNA(n) + a ribonucleoside 5'-triphosphate = RNA(n+1) + diphosphate. Its function is as follows. Promotes RNA polymerase assembly. Latches the N- and C-terminal regions of the beta' subunit thereby facilitating its interaction with the beta and alpha subunits. The sequence is that of DNA-directed RNA polymerase subunit omega from Salinispora tropica (strain ATCC BAA-916 / DSM 44818 / JCM 13857 / NBRC 105044 / CNB-440).